The chain runs to 145 residues: Putative pre-16S rRNA nuclease (145 aa).

Belongs to the YqgF nuclease family.

The protein resides in the cytoplasm. Its function is as follows. Could be a nuclease involved in processing of the 5'-end of pre-16S rRNA. This Pseudomonas fluorescens (strain Pf0-1) protein is Putative pre-16S rRNA nuclease.